Here is a 414-residue protein sequence, read N- to C-terminus: 2,3-diketo-5-methylthiopentyl-1-phosphate enolase (414 aa).

The active-site Proton acceptor is the lysine 99. Substrate contacts are provided by residues lysine 148, 174-177, histidine 265, glycine 338, and 360-361; these read KDDE and GG. Positions 174, 176, and 177 each coordinate Mg(2+). Lysine 174 is modified (N6-carboxylysine).

The protein belongs to the RuBisCO large chain family. Type IV subfamily. Homodimer. The cofactor is Mg(2+).

It carries out the reaction 5-methylsulfanyl-2,3-dioxopentyl phosphate = 2-hydroxy-5-methylsulfanyl-3-oxopent-1-enyl phosphate. It participates in amino-acid biosynthesis; L-methionine biosynthesis via salvage pathway; L-methionine from S-methyl-5-thio-alpha-D-ribose 1-phosphate: step 3/6. Its function is as follows. Catalyzes the enolization of 2,3-diketo-5-methylthiopentyl-1-phosphate (DK-MTP-1-P) into 2-hydroxy-3-keto-5-methylthiopentenyl-1-phosphate (HK-MTPenyl-1-P). This Bacillus cereus (strain Q1) protein is 2,3-diketo-5-methylthiopentyl-1-phosphate enolase.